Reading from the N-terminus, the 124-residue chain is Small ribosomal subunit protein bS6 (124 aa).

Positions 96–124 are disordered; that stretch reads ETGPSPMMKEVQREEAKKAAAAQPAEAQA. Residues 114-124 show a composition bias toward low complexity; sequence AAAAQPAEAQA.

This sequence belongs to the bacterial ribosomal protein bS6 family.

Binds together with bS18 to 16S ribosomal RNA. In Burkholderia orbicola (strain AU 1054), this protein is Small ribosomal subunit protein bS6.